The sequence spans 1561 residues: MSGQVTQPKLIKDWTKEHVRKWVTEDLNIVEKYAQILFKEEVTGMVLQELTEEDLREMGLPRGPALLIKRMYNKLISSPESHNQDSRELNDKKLSTKEQQTKTKNEEENSVSSNSDHGLRETGQNEEQEPSLTKENMLGDVVTKDMEDNKPKPEQMSCTPYPFDSFCDVKQYIEHSILRVAETGPLNLIDPIHEFKAFTNTKKATEEDIKMKFSNETFRFAAACMNSRTNGTIHFGVKDKPHGEIVGVQVTSKDIFVNHFNTMITKYFEDSEISEARACIREPRFVEVLLQNNTQSNRFVIEVDVIPRHSICQEKYFYIMMQSSTGKTWKQSKDTSLFVREGASSKNILGNPNQRDREFKKFLEDLKMWTASRKAAEEELRMVTKKESEGLKLSKLLTRHQGSLDESYYDWYILVTNTCAPTQLEHLEFIKEMKLFAVLDFDPYSHIKGVVKAYRESRIANLHLPSHYEEKTTIAEKISTLKLYEQPSWIFCNGRVDLSCQPLEPHLWQRDRASGVRRLISFLTDENIIVKGKVLVVFLLLSPIENQKDPLIETFCAFYQVFNGMDNMLCICVNSAIYQQWSDLLQVRLEIKDDLAKHSISTLNIELVNNTILKLKSVIQSSRRFLPSCGSSSVILEKMDEDIMSALEILCENECKDTDIEKDESQFLEFKKSREEHFYRGGRVSWWNFYFSSENYSSAFVKRDSFEELTTLIQQCADSPKPVFVKVINLYHHPGCGGTTLAMHVLWDLKQKFRCAVLKNKATDFVEIGEQVSKLMSYKATSHEDFIPVLLLVDDFEEQENAYILQNAINAFIAEKGLRYEKTLVIILNCMRSQNPDESAKLANSISLKYQLSPKEQRAFEAKLQEIEKEHKNCENFYSFMILKGNFDTTYIKNVVKNTLKDLDAKSRRAQLISYLALLNSYVTDSTISVSQCEIFLGITYTKKYGKPETVEKNMGTYSTLLIRTEVSDYGRYTGIRIIHPLIATHCLKELEMSYRMDKCQIALNMLEENVLYDSGLGRDKFKYDVQTLLLTRQRKEHGAETDTLFSPLIEELQNEETEKVLIAGSDRFPQNAFICQALARHFYIKEKNFSTALVWANLAKRKAPKNSYISDTLGQVYKSELNSGWEVAEKASKAFKESQNQSDSKDYGTEAWSPQNSQRRYDTFNTAGFFGEIEVGLDTIQLLQLTPLFHKENEISKESMAEFLSGKGTILSDPKGEYCVVLSKFTSLLQNLHSDLERCFHFFGDYMGFLKPRNTPKELTELLLSKKVSRCFKKYVELFCHLDTNLVQGKEDLLLQKENCRKRIQAWRADTFSGLLEYLNPNHKEANNIENIVGNYTFLLQDILNKQLSKVLTKDIQNFILANIILSCLKPSSKYILPFSTLKKKLREVLQIVGLTHSYPDPYFLACLLFWPENKELDEDSTLIEKYVSSLNRSFRRQYKHMCRSRQPSTLFYLGQKKGLNSLVHKAEIERYFSEVQDSNSFWHSGVVWEKREVKDLLRLLDGQAEGKLISLEYGTEAKIKIPVTSVYSAPLRSGRNIERVSFYLGFSIEGPLAYGIKVI.

Positions 14–79 (WTKEHVRKWV…RMYNKLISSP (66 aa)) constitute an SAM domain. A disordered region spans residues 78–157 (SPESHNQDSR…DNKPKPEQMS (80 aa)). Composition is skewed to basic and acidic residues over residues 82–107 (HNQD…KNEE) and 142–153 (VTKDMEDNKPKP).

Interacts with EEA1.

It localises to the early endosome. It is found in the mitochondrion. May be involved in endosome fusion. Mediates down-regulation of growth factor signaling via internalization of growth factor receptors. This Mus musculus (Mouse) protein is Sterile alpha motif domain-containing protein 9-like (Samd9l).